Consider the following 383-residue polypeptide: Putative F-box/kelch-repeat protein At1g62270 (383 aa).

The 46-residue stretch at 6 to 51 folds into the F-box domain; the sequence is TSSFSSLPWDLVEDILARVPATSLKRLRSTCKQWNFLFNDQIFTKM. Kelch repeat units follow at residues 110–158, 160–211, and 349–383; these read KVFH…YGNY, SCYN…LRGN, and TVYIIGENEYWRKEDIVQRSYRPRMFSYVPSLVQI.

The sequence is that of Putative F-box/kelch-repeat protein At1g62270 from Arabidopsis thaliana (Mouse-ear cress).